The following is an 806-amino-acid chain: G-type lectin S-receptor-like serine/threonine-protein kinase At1g61430 (806 aa).

An N-terminal signal peptide occupies residues 1–24 (MGKKRIVFFAYLPFFTIFMSFSFA). A Bulb-type lectin domain is found at 25–144 (GITKESPFSI…VSGRTLWQSF (120 aa)). Over 25 to 425 (GITKESPFSI…ELDVNKRKMT (401 aa)) the chain is Extracellular. 4 N-linked (GlcNAc...) asparagine glycosylation sites follow: asparagine 53, asparagine 94, asparagine 117, and asparagine 236. Positions 277–313 (PANSCDIYGVCGPFGLCVVSIPPKCKCFKGFVPKFAK) constitute an EGF-like domain. 2 disulfides stabilise this stretch: cysteine 281-cysteine 293 and cysteine 287-cysteine 301. N-linked (GlcNAc...) asparagine glycosylation is found at asparagine 319, asparagine 335, and asparagine 374. A PAN domain is found at 332 to 414 (CQGNSSGKDA…GELLSIRLAR (83 aa)). Intrachain disulfides connect cysteine 367–cysteine 388 and cysteine 371–cysteine 377. The helical transmembrane segment at 426-446 (IVASTVSLTLFVIFGFAAFGF) threads the bilayer. Over 447–806 (WRCRVEHNAH…EMTESVIQGR (360 aa)) the chain is Cytoplasmic. Residues 489 to 777 (FSLSNKLGPG…DLPLPKKPTF (289 aa)) form the Protein kinase domain. Residues 495–503 (LGPGGFGSV) and lysine 520 each bind ATP. 2 positions are modified to phosphoserine: serine 526 and serine 541. The segment at 581–598 (RKKLELDWPKRFEIIEGI) is caM-binding. Residue aspartate 617 is the Proton acceptor of the active site. 2 positions are modified to phosphoserine: serine 621 and serine 634. Threonine 651 is subject to Phosphothreonine. Serine 694, serine 695, and serine 788 each carry phosphoserine.

This sequence belongs to the protein kinase superfamily. Ser/Thr protein kinase family.

It is found in the cell membrane. It carries out the reaction L-seryl-[protein] + ATP = O-phospho-L-seryl-[protein] + ADP + H(+). The enzyme catalyses L-threonyl-[protein] + ATP = O-phospho-L-threonyl-[protein] + ADP + H(+). In Arabidopsis thaliana (Mouse-ear cress), this protein is G-type lectin S-receptor-like serine/threonine-protein kinase At1g61430.